The sequence spans 319 residues: Probable NAD(P)H-dependent D-xylose reductase xyl1 (319 aa).

The active-site Proton donor is the Y50. Substrate is bound at residue H112. NAD(+) is bound by residues 166–167 (SN), 215–224 (SSFGPLSFLE), and 271–281 (KSNNPARLLQN).

It belongs to the aldo/keto reductase family.

The catalysed reaction is xylitol + NAD(+) = D-xylose + NADH + H(+). It catalyses the reaction xylitol + NADP(+) = D-xylose + NADPH + H(+). It functions in the pathway carbohydrate metabolism; D-xylose degradation. Functionally, catalyzes the initial reaction in the xylose utilization pathway by reducing D-xylose into xylitol. Xylose is a major component of hemicelluloses such as xylan. Most fungi utilize D-xylose via three enzymatic reactions, xylose reductase (XR), xylitol dehydrogenase (XDH), and xylulokinase, to form xylulose 5-phosphate, which enters pentose phosphate pathway. This Emericella nidulans (strain FGSC A4 / ATCC 38163 / CBS 112.46 / NRRL 194 / M139) (Aspergillus nidulans) protein is Probable NAD(P)H-dependent D-xylose reductase xyl1 (xyl1).